Here is a 236-residue protein sequence, read N- to C-terminus: Phosphoglycolate phosphatase (236 aa).

Asp23 serves as the catalytic Nucleophile. Mg(2+)-binding residues include Asp23 and Asp25. Lys162 lines the substrate pocket. Residues Asp185 and Asp189 each coordinate Mg(2+).

Belongs to the archaeal SPP-like hydrolase family. It depends on Mg(2+) as a cofactor.

The enzyme catalyses 2-phosphoglycolate + H2O = glycolate + phosphate. Functionally, catalyzes the dephosphorylation of 2-phosphoglycolate. The sequence is that of Phosphoglycolate phosphatase from Picrophilus torridus (strain ATCC 700027 / DSM 9790 / JCM 10055 / NBRC 100828 / KAW 2/3).